We begin with the raw amino-acid sequence, 300 residues long: Fluorinase (300 aa).

S-adenosyl-L-methionine-binding positions include Asp16, 21 to 23 (DDS), Tyr77, Ser158, Asp211, Asn216, 270 to 271 (SR), and 278 to 280 (RNA).

Belongs to the SAM hydrolase / SAM-dependent halogenase family. As to quaternary structure, homohexamer.

The catalysed reaction is fluoride + S-adenosyl-L-methionine = 5'-deoxy-5'-fluoroadenosine + L-methionine. It catalyses the reaction chloride + S-adenosyl-L-methionine = 5'-chloro-5'-deoxyadenosine + L-methionine. With respect to regulation, activity is severely inhibited by 1 mM Cu(2+) or Zn(2+). Functionally, catalyzes the formation of a C-F bond by combining S-adenosyl-L-methionine (SAM) and fluoride to generate 5'-fluoro-5'-deoxyadenosine (5'-FDA) and L-methionine. Probably involved in fluoroacetate (FAc) and 4-fluorothreonine (4-FT) biosynthesis. In vitro, can also catalyze the conversion of chloride and SAM to 5'-chloro-5'-deoxyadenosine (5'-CIDA) and L-methionine in the presence of L-amino acid oxidase. The polypeptide is Fluorinase (Nocardia brasiliensis (strain ATCC 700358 / HUJEG-1)).